Consider the following 227-residue polypeptide: NAD(P)H-quinone oxidoreductase subunit K, chloroplastic (227 aa).

[4Fe-4S] cluster is bound by residues Cys43, Cys44, Cys108, and Cys139.

It belongs to the complex I 20 kDa subunit family. NDH is composed of at least 16 different subunits, 5 of which are encoded in the nucleus. Requires [4Fe-4S] cluster as cofactor.

It localises to the plastid. It is found in the chloroplast thylakoid membrane. It catalyses the reaction a plastoquinone + NADH + (n+1) H(+)(in) = a plastoquinol + NAD(+) + n H(+)(out). It carries out the reaction a plastoquinone + NADPH + (n+1) H(+)(in) = a plastoquinol + NADP(+) + n H(+)(out). Functionally, NDH shuttles electrons from NAD(P)H:plastoquinone, via FMN and iron-sulfur (Fe-S) centers, to quinones in the photosynthetic chain and possibly in a chloroplast respiratory chain. The immediate electron acceptor for the enzyme in this species is believed to be plastoquinone. Couples the redox reaction to proton translocation, and thus conserves the redox energy in a proton gradient. The sequence is that of NAD(P)H-quinone oxidoreductase subunit K, chloroplastic from Spinacia oleracea (Spinach).